A 146-amino-acid chain; its full sequence is Hemoglobin subunit beta (146 aa).

Val-1 bears the N-acetylvaline mark. Residues 2–146 (HLTPEEKNAV…VANALAHKYH (145 aa)) enclose the Globin domain. Residue Thr-12 is modified to Phosphothreonine. Phosphoserine is present on Ser-44. Lys-59 bears the N6-acetyllysine mark. Residue His-63 participates in heme b binding. N6-acetyllysine is present on Lys-82. His-92 provides a ligand contact to heme b. At Cys-93 the chain carries S-nitrosocysteine. At Lys-144 the chain carries N6-acetyllysine.

It belongs to the globin family. As to quaternary structure, heterotetramer of two alpha chains and two beta chains. As to expression, red blood cells.

Involved in oxygen transport from the lung to the various peripheral tissues. This chain is Hemoglobin subunit beta (HBB), found in Papio cynocephalus (Yellow baboon).